The primary structure comprises 263 residues: uncharacterized protein (263 aa).

A Response regulatory domain is found at 6-121; it reads TAIIADDEPL…RLQTTCERVK (116 aa). D58 bears the 4-aspartylphosphate mark. One can recognise an HTH LytTR-type domain in the interval 158 to 263; the sequence is IKATQGDDIH…RASQSLFKGM (106 aa).

This is an uncharacterized protein from Vibrio parahaemolyticus serotype O3:K6 (strain RIMD 2210633).